The sequence spans 268 residues: ClpXP adapter protein SpxH (268 aa).

It belongs to the SpxH family. Interacts with Spx.

The protein localises to the cytoplasm. Adapter protein required for efficient degradation of Spx by ClpXP under non-stress conditions. Interaction with Spx stabilizes Spx and exposes the C-terminus of Spx for recognition and proteolysis by ClpXP. The chain is ClpXP adapter protein SpxH from Staphylococcus aureus (strain COL).